Consider the following 107-residue polypeptide: Large ribosomal subunit protein P2 (107 aa).

Residues 86–107 (PAAAAAEAEEEDDDDMGFGLFD) form a disordered region. The segment covering 92 to 101 (EAEEEDDDDM) has biased composition (acidic residues).

This sequence belongs to the eukaryotic ribosomal protein P1/P2 family. In terms of assembly, P1 and P2 exist as dimers at the large ribosomal subunit. In terms of processing, phosphorylated.

Its function is as follows. Plays an important role in the elongation step of protein synthesis. The polypeptide is Large ribosomal subunit protein P2 (Trypanosoma brucei brucei).